The sequence spans 345 residues: Fructose-1,6-bisphosphatase class 1 2 (345 aa).

The Mg(2+) site is built by Glu90, Asp109, Leu111, and Asp112. Substrate is bound by residues 112-115 and Asn200; that span reads DGSS. Position 272 (Glu272) interacts with Mg(2+).

This sequence belongs to the FBPase class 1 family. Homotetramer. Mg(2+) is required as a cofactor.

Its subcellular location is the cytoplasm. The catalysed reaction is beta-D-fructose 1,6-bisphosphate + H2O = beta-D-fructose 6-phosphate + phosphate. The protein operates within carbohydrate biosynthesis; gluconeogenesis. The sequence is that of Fructose-1,6-bisphosphatase class 1 2 from Nitrobacter hamburgensis (strain DSM 10229 / NCIMB 13809 / X14).